Here is an 819-residue protein sequence, read N- to C-terminus: MADVLSRFNSGKLWDFKGGIHPPEMKSQSNSQPLRHLPLGTDFYIPLKQHLGTTGNLLIKEGDYVLKGQALTKGDGLRMLPVHAPTSGTIKSIKPYVATHPSGLDEPTIHLQADGLDQWIERNPIDDFSTLSSEQLIHKIYQAGIAGLGGAVFPTAAKIQSAEQKVKLLIINGAECEPYITCDDRLMRERADEIIKGIRILRYILHPEKVVIAIEDNKPEAISAIRNALQGANDISIRVIPTKYPSGATKQLIYLLTGIEVPSGERSSSIGVLMQNVGTMFAIKRAIINDEPLIERVVTLTGNKIAEKGNYWVRLGTPISQILSDAGYQFDKHFPIFAGGPMMGLELPNLNAPVTKLVNCLLAPDYLEYAEPEAEQACIRCSSCSDACPVNLMPQQLYWFARSEDHKKSEEYALKDCIECGICAYVCPSHIPLIQYFRQEKAKIWQIKEKQKKSDEAKIRFEAKQARMEREEQERKARSQRAAQARREELAQTKGEDPVKAALERLKAKKANETESTQIKTLTSEKGEVLPDNTDLMAQRKARRLARQQAASQVENQEQQTQPTNAKKAAVAAALARAKAKKLAQANSTSEAISNSQTAENQVEKTKSAVEKTQENSTALDPKKAAVAAAIARAKAKKLAQTNSTSEAISNSQTAENEVEKTKSAVEKTEENSTALDAKKAAIAAAIARAKAKKLAQANSASEAISNSQTAENEVEKTKSAVEKTQQNSTALDPKKAAVAAAIARAKAKKLAQANSTSEAISNSQTAENEVEKTKSAVEKTQENSTALDPKKAAVAAAIARAKAKKLAKTQATLENNQE.

4Fe-4S ferredoxin-type domains lie at Glu368 to Tyr398 and Lys408 to Phe437. [4Fe-4S] cluster is bound by residues Cys378, Cys381, Cys384, Cys388, Cys417, Cys420, Cys423, and Cys427. Composition is skewed to basic and acidic residues over residues Gln465–Ala477 and Ala485–Glu513. Disordered regions lie at residues Gln465–Lys568, Ala580–Asp677, and Ala692–Ala793. 2 stretches are compositionally biased toward polar residues: residues Val554 to Asn565 and Asn587 to Asn601. Over residues Gln602 to Gln614 the composition is skewed to basic and acidic residues. Residues Gln641–Glu656 are compositionally biased toward polar residues. The span at Glu658–Glu671 shows a compositional bias: basic and acidic residues. Polar residues-rich tracts occupy residues Asn699–Glu712 and Asn755–Glu768. Residues Glu770–Gln782 show a composition bias toward basic and acidic residues.

The protein belongs to the 4Fe4S bacterial-type ferredoxin family. RnfC subfamily. The complex is composed of six subunits: RnfA, RnfB, RnfC, RnfD, RnfE and RnfG. The cofactor is [4Fe-4S] cluster.

It is found in the cell inner membrane. Functionally, part of a membrane-bound complex that couples electron transfer with translocation of ions across the membrane. The sequence is that of Ion-translocating oxidoreductase complex subunit C from Haemophilus influenzae (strain ATCC 51907 / DSM 11121 / KW20 / Rd).